The primary structure comprises 90 residues: MFKLCVFVALLSLAAAAPAPAPAPAPAPGLIGPGIVAPGIWGPTVVGSPLLAPQVVSVVPGAISHAAITQVHPSPLLIKSVHGLGPVVIG.

Residues Met-1 to Ala-16 form the signal peptide. 2 consecutive propeptides follow at residues Ala-17–Gln-54 and Ala-67–Lys-79. The residue at position 89 (Ile-89) is an Isoleucine amide.

Its subcellular location is the secreted. The protein is Neuropeptide-like 3 (Nplp3) of Drosophila melanogaster (Fruit fly).